Here is a 162-residue protein sequence, read N- to C-terminus: uncharacterized protein (162 aa).

5 helical membrane-spanning segments follow: residues 15 to 40, 47 to 66, 76 to 98, 105 to 124, and 128 to 150; these read TIYSIVGIFLIIILDVTVAVALYFLL, ISMLMSLFRIVYAAIFTTAL, YSILDLGYIFFGIHLFLLGFLVY, KWLGALIFIASTGYIIDPLL, and GYAVEIGMYTFFGEVLFAFWLVI.

It is found in the cell membrane. This is an uncharacterized protein from Archaeoglobus fulgidus (strain ATCC 49558 / DSM 4304 / JCM 9628 / NBRC 100126 / VC-16).